We begin with the raw amino-acid sequence, 318 residues long: MNLLNLFTYVIPIAICIILPIFIIVTHFQIKSLNKAVTSFNKGDRSNALEILSKLVKSPIKNVKANAYITRERIYFYSRDFELSLRDLLQAIKLRPKTINDVYSFALSYHILGEPERALKYFLRAVELQPNVGISYENLAWFYYLTGKYDKAIENFEKAISMGSTNSVYRSLGITYAKIGDYKKSEEYLKKALDAEPEKPSTHIYFSYLKRKTNDIKLAKEYALKAIELNKNNFDGYKNLAEVNLAEDDYDGFYKNLEIFLEKINFVTNGEDFNDEVYDKVKDNEKFKELIAKTKVIKFKDLGIEIDDKKILNGKFLV.

4 TPR repeats span residues 65–98 (ANAY…RPKT), 99–132 (INDV…QPNV), 133–166 (GISY…GSTN), and 167–199 (SVYR…EPEK).

Its function is as follows. Transcriptional repressor of the sol locus (adhE/aad, ctfA, ctfB and adc) genes for butanol and acetone formation. In Clostridium acetobutylicum (strain ATCC 824 / DSM 792 / JCM 1419 / IAM 19013 / LMG 5710 / NBRC 13948 / NRRL B-527 / VKM B-1787 / 2291 / W), this protein is Sol locus transcriptional repressor (solR).